A 223-amino-acid chain; its full sequence is UPF0758 protein Cvib_1178 (223 aa).

The 123-residue stretch at 100–222 folds into the MPN domain; the sequence is KIQGARDVYE…WYSFRENNQL (123 aa). Zn(2+)-binding residues include H171, H173, and D184. Positions 171–184 match the JAMM motif motif; it reads HNHPSGDTEPSNAD.

This sequence belongs to the UPF0758 family.

The polypeptide is UPF0758 protein Cvib_1178 (Chlorobium phaeovibrioides (strain DSM 265 / 1930) (Prosthecochloris vibrioformis (strain DSM 265))).